Reading from the N-terminus, the 496-residue chain is MQWETVIGLEVHAQLSTESKIFSGASTAFGAAPNAEACAVDLALPGVLPVLNRGAVERAIRFGLAVGAKINSPSIFARKNYFYPDLPKGYQISQYELPVVEGGHIQLQVVQDGKEQEKTVRLVRAHLEEDAGKSLHEDFHGMSGIDLNRAGTPLLEIVSEPDMRSSAEAVAYAKTLHTLVRWIGICDGNMQEGSFRCDANVSVRPRGSDKLGTRCEIKNLNSFRFLEKAIDYEVRRQVEILEDGGSIQQQTRLFDPEKGETRAMRSKEDAQDYRYFPDPDLLPLEISGNWIEEVKKGLPELPQQIRTRFEHDYGLSMYDALLLTGDRDISEYYEAVVGKLPSDPKLCANWVMGEVSAYLNNEGKSFDVCPLSPAQLAQLLLRIKDGTISGKIAKDVFRQMWAQAGTESISWRNSEGVDEGLADRIIDSQGLRQISDSSALENLVHEVLAANPKSVEEFKAGKEKAFNALMGQVMKAARGKANPAQVNEILRKKLTE.

It belongs to the GatB/GatE family. GatB subfamily. As to quaternary structure, heterotrimer of A, B and C subunits.

The enzyme catalyses L-glutamyl-tRNA(Gln) + L-glutamine + ATP + H2O = L-glutaminyl-tRNA(Gln) + L-glutamate + ADP + phosphate + H(+). It catalyses the reaction L-aspartyl-tRNA(Asn) + L-glutamine + ATP + H2O = L-asparaginyl-tRNA(Asn) + L-glutamate + ADP + phosphate + 2 H(+). Allows the formation of correctly charged Asn-tRNA(Asn) or Gln-tRNA(Gln) through the transamidation of misacylated Asp-tRNA(Asn) or Glu-tRNA(Gln) in organisms which lack either or both of asparaginyl-tRNA or glutaminyl-tRNA synthetases. The reaction takes place in the presence of glutamine and ATP through an activated phospho-Asp-tRNA(Asn) or phospho-Glu-tRNA(Gln). This Nitrosospira multiformis (strain ATCC 25196 / NCIMB 11849 / C 71) protein is Aspartyl/glutamyl-tRNA(Asn/Gln) amidotransferase subunit B.